The chain runs to 191 residues: Large ribosomal subunit protein uL3 (191 aa).

Positions 119–138 (AAHGSRFHRRPGSIGNREWP) are disordered.

The protein belongs to the universal ribosomal protein uL3 family. Part of the 50S ribosomal subunit. Forms a cluster with proteins L14 and L19.

Its function is as follows. One of the primary rRNA binding proteins, it binds directly near the 3'-end of the 23S rRNA, where it nucleates assembly of the 50S subunit. The polypeptide is Large ribosomal subunit protein uL3 (rplC) (Helicobacter pylori (strain ATCC 700392 / 26695) (Campylobacter pylori)).